A 230-amino-acid chain; its full sequence is Orotidine 5'-phosphate decarboxylase (230 aa).

Residues D11, K34, 61–70 (DLKLHDIPNT), T117, R179, Q188, G208, and R209 contribute to the substrate site. K63 functions as the Proton donor in the catalytic mechanism.

It belongs to the OMP decarboxylase family. Type 1 subfamily. As to quaternary structure, homodimer.

It carries out the reaction orotidine 5'-phosphate + H(+) = UMP + CO2. Its pathway is pyrimidine metabolism; UMP biosynthesis via de novo pathway; UMP from orotate: step 2/2. Functionally, catalyzes the decarboxylation of orotidine 5'-monophosphate (OMP) to uridine 5'-monophosphate (UMP). The chain is Orotidine 5'-phosphate decarboxylase from Streptococcus pyogenes serotype M18 (strain MGAS8232).